Here is a 217-residue protein sequence, read N- to C-terminus: Probable transaldolase (217 aa).

Catalysis depends on K83, which acts as the Schiff-base intermediate with substrate.

The protein belongs to the transaldolase family. Type 3B subfamily.

It localises to the cytoplasm. The enzyme catalyses D-sedoheptulose 7-phosphate + D-glyceraldehyde 3-phosphate = D-erythrose 4-phosphate + beta-D-fructose 6-phosphate. The protein operates within carbohydrate degradation; pentose phosphate pathway; D-glyceraldehyde 3-phosphate and beta-D-fructose 6-phosphate from D-ribose 5-phosphate and D-xylulose 5-phosphate (non-oxidative stage): step 2/3. Transaldolase is important for the balance of metabolites in the pentose-phosphate pathway. The protein is Probable transaldolase of Fervidobacterium nodosum (strain ATCC 35602 / DSM 5306 / Rt17-B1).